A 637-amino-acid chain; its full sequence is Serine/threonine-protein kinase Nek11 (637 aa).

The Protein kinase domain maps to 29–287 (YVLQQKLGSG…AIEILKIPYI (259 aa)). Residues 35–43 (LGSGSFGTV) and K61 each bind ATP. D158 acts as the Proton acceptor in catalysis. At S273 the chain carries Phosphoserine; by CHEK1. The stretch at 302 to 385 (TLEDKNLDCQ…QELRSRNFQQ (84 aa)) forms a coiled coil. A disordered region spans residues 399–446 (GMEEKEEQPEGRPSCSPQDEDEERWQDREEEFDEPTLENLSEPQPIPS). The segment covering 416–434 (QDEDEERWQDREEEFDEPT) has biased composition (acidic residues).

The protein belongs to the protein kinase superfamily. NEK Ser/Thr protein kinase family. NIMA subfamily. As to quaternary structure, interacts with NEK2. Requires Mn(2+) as cofactor. The cofactor is Mg(2+). Phosphorylated by NEK2. Phosphorylation at Ser-273 is important for its activation.

It is found in the nucleus. Its subcellular location is the nucleolus. The enzyme catalyses L-seryl-[protein] + ATP = O-phospho-L-seryl-[protein] + ADP + H(+). It carries out the reaction L-threonyl-[protein] + ATP = O-phospho-L-threonyl-[protein] + ADP + H(+). Its activity is regulated as follows. Autorepressed by intramolecular binding of the C-terminus which dissociates following phosphorylation by NEK2. Activated in response to DNA damage. Inhibited by zinc. Its function is as follows. Protein kinase which plays an important role in the G2/M checkpoint response to DNA damage. Controls degradation of CDC25A by directly phosphorylating it on residues whose phosphorylation is required for BTRC-mediated polyubiquitination and degradation. This is Serine/threonine-protein kinase Nek11 (NEK11) from Macaca fascicularis (Crab-eating macaque).